A 416-amino-acid chain; its full sequence is Casein kinase I isoform epsilon (416 aa).

A Protein kinase domain is found at 9 to 277; sequence YRLGRKIGSG…YLRQLFRNLF (269 aa). ATP-binding positions include 15–23 and Lys-38; that span reads IGSGSFGDI. Catalysis depends on Asp-128, which acts as the Proton acceptor. A compositionally biased stretch (basic and acidic residues) spans 301 to 318; sequence PEDVDRERREHEREERMG. Positions 301–416 are disordered; that stretch reads PEDVDRERRE…TSVPFDHLGK (116 aa). Residues Ser-343 and Ser-354 each carry the phosphoserine modification. Over residues 351-365 the composition is skewed to polar residues; that stretch reads TPASRIQQTGNTSPR. Thr-362 is modified (phosphothreonine). Ser-363 is subject to Phosphoserine. An Omega-N-methylarginine modification is found at Arg-382. Residues Ser-389, Ser-405, and Ser-408 each carry the phosphoserine modification.

It belongs to the protein kinase superfamily. CK1 Ser/Thr protein kinase family. Casein kinase I subfamily. Monomer. Component of the circadian core oscillator, which includes the CRY proteins, CLOCK, or NPAS2, ARTNL/BMAL1 or ARTNL2/BMAL2, CSNK1D and/or CSNK1E, TIMELESS and the PER proteins. Interacts with ANKRD6. Interacts with PER1. Interacts with DBNDD2, LRP5, LRP6 and SOCS3. Interacts with SNAI1 (via zinc fingers). Interacts with DDX3X; this interaction greatly enhances CSNK1E affinity for ATP and DVL2 phosphorylation, but inhibits DDX3X ATPase/helicase activity. In the presence of RNA, the interaction is decreased. Interacts with FAM83A, FAM83B, FAM83E and FAM83H (via DUF1669). Post-translationally, autophosphorylated. Partially dephosphorylated by PPP5C. May be dephosphorylated by PP1. Expressed in all tissues examined, including brain, heart, lung, liver, pancreas, kidney, placenta and skeletal muscle. Expressed in monocytes and lymphocytes but not in granulocytes.

The protein resides in the cytoplasm. It localises to the nucleus. It carries out the reaction L-seryl-[protein] + ATP = O-phospho-L-seryl-[protein] + ADP + H(+). It catalyses the reaction L-threonyl-[protein] + ATP = O-phospho-L-threonyl-[protein] + ADP + H(+). Phosphorylation leads to a decrease in the catalytic activity. Functionally, casein kinases are operationally defined by their preferential utilization of acidic proteins such as caseins as substrates. Participates in Wnt signaling. Phosphorylates DVL1. Phosphorylates DVL2. Phosphorylates NEDD9/HEF1. Central component of the circadian clock. In balance with PP1, determines the circadian period length, through the regulation of the speed and rhythmicity of PER1 and PER2 phosphorylation. Controls PER1 and PER2 nuclear transport and degradation. Inhibits cytokine-induced granuloytic differentiation. This Mus musculus (Mouse) protein is Casein kinase I isoform epsilon (Csnk1e).